The chain runs to 196 residues: uncharacterized protein (196 aa).

Residues 122–135 are compositionally biased toward basic and acidic residues; sequence SEIEKKQEPIERKT. The interval 122-150 is disordered; the sequence is SEIEKKQEPIERKTSTTTNTESNQEKPLR.

This is an uncharacterized protein from Leptospira interrogans.